The chain runs to 402 residues: N-acetyltransferase Eis (402 aa).

Residues valine 3 to proline 154 form the N-acetyltransferase domain. Residues valine 85–valine 87, arginine 93–arginine 98, and serine 121–glutamate 122 contribute to the acetyl-CoA site. The active-site Proton donor is the tyrosine 126. Catalysis depends on phenylalanine 402, which acts as the Proton acceptor; via carboxylate.

Belongs to the acetyltransferase Eis family. Homohexamer; trimer of dimers.

It is found in the secreted. The protein localises to the host cytoplasmic vesicle. The protein resides in the host phagosome. It localises to the extracellular vesicle. Its subcellular location is the bacterial extracellular vesicle. It is found in the host extracellular space. The enzyme catalyses L-lysyl-[protein] + acetyl-CoA = N(6)-acetyl-L-lysyl-[protein] + CoA + H(+). Functionally, effector that is released into the host cell and affects host immune responses. Acts as an acetyltransferase that acetylates lysine residues of host proteins. This is N-acetyltransferase Eis from Mycobacterium bovis (strain BCG / Pasteur 1173P2).